We begin with the raw amino-acid sequence, 639 residues long: Collagen alpha-1(XII) chain (639 aa).

A VWFA domain is found at cysteine 1–leucine 114. 6 consecutive Fibronectin type-III domains span residues alanine 130–proline 219, isoleucine 220–proline 310, arginine 311–proline 401, threonine 402–serine 490, glycine 491–asparagine 585, and leucine 586–leucine 639. The disordered stretch occupies residues aspartate 473 to glutamine 496.

This sequence belongs to the fibril-associated collagens with interrupted helices (FACIT) family. As to quaternary structure, trimer of identical chains each containing 190 kDa of non-triple-helical sequences. In terms of processing, the triple-helical tail is stabilized by disulfide bonds at each end. Prolines at the third position of the tripeptide repeating unit (G-X-Y) are hydroxylated in some or all of the chains. Post-translationally, O-glycosylated; glycosaminoglycan of chondroitin-sulfate type.

The protein localises to the secreted. The protein resides in the extracellular space. It localises to the extracellular matrix. Functionally, type XII collagen interacts with type I collagen-containing fibrils, the COL1 domain could be associated with the surface of the fibrils, and the COL2 and NC3 domains may be localized in the perifibrillar matrix. The protein is Collagen alpha-1(XII) chain (COL12A1) of Oryctolagus cuniculus (Rabbit).